The following is a 29-amino-acid chain: MDILTLGWVSILALFTWSIAMVVWGRNGF.

Residues Ile-3–Val-23 traverse the membrane as a helical segment.

The protein belongs to the PetN family. As to quaternary structure, the 4 large subunits of the cytochrome b6-f complex are cytochrome b6, subunit IV (17 kDa polypeptide, PetD), cytochrome f and the Rieske protein, while the 4 small subunits are PetG, PetL, PetM and PetN. The complex functions as a dimer.

It is found in the cellular thylakoid membrane. Its function is as follows. Component of the cytochrome b6-f complex, which mediates electron transfer between photosystem II (PSII) and photosystem I (PSI), cyclic electron flow around PSI, and state transitions. In Microcystis aeruginosa (strain NIES-843 / IAM M-2473), this protein is Cytochrome b6-f complex subunit 8.